The following is a 327-amino-acid chain: Phosphate acyltransferase (327 aa).

The protein belongs to the PlsX family. As to quaternary structure, homodimer. Probably interacts with PlsY.

Its subcellular location is the cytoplasm. It catalyses the reaction a fatty acyl-[ACP] + phosphate = an acyl phosphate + holo-[ACP]. The protein operates within lipid metabolism; phospholipid metabolism. In terms of biological role, catalyzes the reversible formation of acyl-phosphate (acyl-PO(4)) from acyl-[acyl-carrier-protein] (acyl-ACP). This enzyme utilizes acyl-ACP as fatty acyl donor, but not acyl-CoA. The protein is Phosphate acyltransferase of Thermotoga maritima (strain ATCC 43589 / DSM 3109 / JCM 10099 / NBRC 100826 / MSB8).